The chain runs to 352 residues: UPF0324 membrane protein blr3189 (352 aa).

A run of 11 helical transmembrane segments spans residues 21–43 (IAALIPGILLCIAVAGVSALLER), 53–71 (YVEALVMAILLGMALRSFW), 88–110 (LLEVAVMLLGASISFAAIAASGI), 114–136 (ASIAAVVVIALCVSFGLSRLLGL), 143–165 (LIACGNSICGNSAIAAVAPIIGA), 175–197 (SFTAILGVMMVLGLPLLIPLLQL), 204–226 (ILAGLTVYAVPQVLAATVPAGLV), 236–253 (LMRVLMLGPVVVGLSLVA), 265–284 (VGFFRLVPWFILGFLALATL), 294–316 (VVGPVTKITSFLTVVSMAALGLG), and 329–351 (VTAAVTLSLMLLLGISIALVHWF).

This sequence belongs to the UPF0324 family.

It is found in the cell membrane. This is UPF0324 membrane protein blr3189 from Bradyrhizobium diazoefficiens (strain JCM 10833 / BCRC 13528 / IAM 13628 / NBRC 14792 / USDA 110).